Reading from the N-terminus, the 308-residue chain is Oxygen-dependent coproporphyrinogen-III oxidase (308 aa).

Ser100 is a substrate binding site. Residues His104 and His114 each coordinate a divalent metal cation. His114 functions as the Proton donor in the catalytic mechanism. 116-118 serves as a coordination point for substrate; sequence NFR. 2 residues coordinate a divalent metal cation: His153 and His183. An important for dimerization region spans residues 248-283; the sequence is YVEFNLVFDRGTIFGLQSGGRTESILSSMPPMATWK. 266 to 268 is a substrate binding site; that stretch reads GGR.

Belongs to the aerobic coproporphyrinogen-III oxidase family. Homodimer. It depends on a divalent metal cation as a cofactor.

The protein localises to the cytoplasm. The catalysed reaction is coproporphyrinogen III + O2 + 2 H(+) = protoporphyrinogen IX + 2 CO2 + 2 H2O. It participates in porphyrin-containing compound metabolism; protoporphyrin-IX biosynthesis; protoporphyrinogen-IX from coproporphyrinogen-III (O2 route): step 1/1. Its function is as follows. Involved in the heme biosynthesis. Catalyzes the aerobic oxidative decarboxylation of propionate groups of rings A and B of coproporphyrinogen-III to yield the vinyl groups in protoporphyrinogen-IX. The polypeptide is Oxygen-dependent coproporphyrinogen-III oxidase (Francisella tularensis subsp. mediasiatica (strain FSC147)).